A 151-amino-acid polypeptide reads, in one-letter code: Nucleoside diphosphate kinase (151 aa).

Residues lysine 11, phenylalanine 59, arginine 87, threonine 93, arginine 104, and asparagine 114 each contribute to the ATP site. The active-site Pros-phosphohistidine intermediate is the histidine 117.

It belongs to the NDK family. Homotetramer. Requires Mg(2+) as cofactor.

It localises to the cytoplasm. The enzyme catalyses a 2'-deoxyribonucleoside 5'-diphosphate + ATP = a 2'-deoxyribonucleoside 5'-triphosphate + ADP. It catalyses the reaction a ribonucleoside 5'-diphosphate + ATP = a ribonucleoside 5'-triphosphate + ADP. Its function is as follows. Major role in the synthesis of nucleoside triphosphates other than ATP. The ATP gamma phosphate is transferred to the NDP beta phosphate via a ping-pong mechanism, using a phosphorylated active-site intermediate. The sequence is that of Nucleoside diphosphate kinase from Prochlorococcus marinus (strain MIT 9211).